Consider the following 108-residue polypeptide: Glutaredoxin (108 aa).

The Glutaredoxin domain occupies 3 to 103 (LAKAKEIVSG…PLLTEAGAIA (101 aa)). The cysteines at positions 23 and 26 are disulfide-linked.

This sequence belongs to the glutaredoxin family. CPYC subfamily.

It localises to the cytoplasm. Its function is as follows. Has a glutathione-disulfide oxidoreductase activity in the presence of NADPH and glutathione reductase. Reduces low molecular weight disulfides and proteins. The sequence is that of Glutaredoxin from Solanum lycopersicum (Tomato).